A 426-amino-acid polypeptide reads, in one-letter code: Adenylosuccinate synthetase (426 aa).

Residues Gly12–Lys18 and Gly40–Thr42 each bind GTP. Catalysis depends on Asp13, which acts as the Proton acceptor. Positions 13 and 40 each coordinate Mg(2+). IMP is bound by residues Asp13 to Lys16, Asn38 to His41, Thr128, Arg142, Gln223, Thr238, and Arg302. His41 (proton donor) is an active-site residue. Thr298–Arg304 contacts substrate. GTP contacts are provided by residues Arg304, Lys330–Asp332, and Ser412–Gly414.

Belongs to the adenylosuccinate synthetase family. Homodimer. The cofactor is Mg(2+).

It localises to the cytoplasm. The enzyme catalyses IMP + L-aspartate + GTP = N(6)-(1,2-dicarboxyethyl)-AMP + GDP + phosphate + 2 H(+). Its pathway is purine metabolism; AMP biosynthesis via de novo pathway; AMP from IMP: step 1/2. In terms of biological role, plays an important role in the de novo pathway of purine nucleotide biosynthesis. Catalyzes the first committed step in the biosynthesis of AMP from IMP. The chain is Adenylosuccinate synthetase from Thermoanaerobacter pseudethanolicus (strain ATCC 33223 / 39E) (Clostridium thermohydrosulfuricum).